The primary structure comprises 368 residues: Transaldolase (368 aa).

The active-site Schiff-base intermediate with substrate is Lys140.

This sequence belongs to the transaldolase family. Type 2 subfamily.

It is found in the cytoplasm. The catalysed reaction is D-sedoheptulose 7-phosphate + D-glyceraldehyde 3-phosphate = D-erythrose 4-phosphate + beta-D-fructose 6-phosphate. The protein operates within carbohydrate degradation; pentose phosphate pathway; D-glyceraldehyde 3-phosphate and beta-D-fructose 6-phosphate from D-ribose 5-phosphate and D-xylulose 5-phosphate (non-oxidative stage): step 2/3. Functionally, transaldolase is important for the balance of metabolites in the pentose-phosphate pathway. The protein is Transaldolase of Kocuria rhizophila (strain ATCC 9341 / DSM 348 / NBRC 103217 / DC2201).